Consider the following 253-residue polypeptide: UPF0280 protein MA_1715 (253 aa).

Belongs to the UPF0280 family.

The protein is UPF0280 protein MA_1715 of Methanosarcina acetivorans (strain ATCC 35395 / DSM 2834 / JCM 12185 / C2A).